The primary structure comprises 270 residues: Putative ABC transporter ATP-binding protein MG304 homolog (270 aa).

The ABC transporter domain occupies 2-232; sequence LNVTNLSFTY…LHLFHQHHFT (231 aa). 36–43 lines the ATP pocket; sequence GHNGSGKS.

This sequence belongs to the ABC transporter superfamily.

The protein is Putative ABC transporter ATP-binding protein MG304 homolog of Mycoplasma pneumoniae (strain ATCC 29342 / M129 / Subtype 1) (Mycoplasmoides pneumoniae).